The chain runs to 475 residues: Eukaryotic translation initiation factor 3 subunit L (475 aa).

The region spanning 257-451 (DAIRMFSHIL…DLDYAMQGDL (195 aa)) is the PCI domain.

Belongs to the eIF-3 subunit L family. In terms of assembly, component of the eukaryotic translation initiation factor 3 (eIF-3) complex.

It localises to the cytoplasm. Functionally, component of the eukaryotic translation initiation factor 3 (eIF-3) complex, which is involved in protein synthesis of a specialized repertoire of mRNAs and, together with other initiation factors, stimulates binding of mRNA and methionyl-tRNAi to the 40S ribosome. The eIF-3 complex specifically targets and initiates translation of a subset of mRNAs involved in cell proliferation. In Botryotinia fuckeliana (strain B05.10) (Noble rot fungus), this protein is Eukaryotic translation initiation factor 3 subunit L.